Here is a 355-residue protein sequence, read N- to C-terminus: Natterin-1 (355 aa).

The signal sequence occupies residues 1 to 18; the sequence is MIPSVLLVTLLLLSWTSA. The propeptide occupies 19-27; the sequence is EKDLKVRVA.

The protein belongs to the natterin family. Post-translationally, contains 4 disulfide bonds. As to expression, expressed by the venom gland.

The protein resides in the secreted. Its activity is regulated as follows. Inhibited by tissue-kallikrein inhibitor TKI and trasylol. Plasma kallikrein inhibitor PKSI527 and classical inhibitors of serine-, metallo-, thiol- or aspartate-peptidases evokes a minor inhibition of the peptide digestion. In terms of biological role, shows nociceptive, edema-inducing and kininogenase activity with release of kallidin from low molecular weight kininogen. The cleavage occurs at Met-Lys bonds. In Thalassophryne nattereri (Copper Joe toadfish), this protein is Natterin-1.